A 160-amino-acid chain; its full sequence is SsrA-binding protein (160 aa).

The tract at residues 131–160 (KKEYDKRHTERERDSDRELQRAVRSKGKDD) is disordered.

This sequence belongs to the SmpB family.

It is found in the cytoplasm. Functionally, required for rescue of stalled ribosomes mediated by trans-translation. Binds to transfer-messenger RNA (tmRNA), required for stable association of tmRNA with ribosomes. tmRNA and SmpB together mimic tRNA shape, replacing the anticodon stem-loop with SmpB. tmRNA is encoded by the ssrA gene; the 2 termini fold to resemble tRNA(Ala) and it encodes a 'tag peptide', a short internal open reading frame. During trans-translation Ala-aminoacylated tmRNA acts like a tRNA, entering the A-site of stalled ribosomes, displacing the stalled mRNA. The ribosome then switches to translate the ORF on the tmRNA; the nascent peptide is terminated with the 'tag peptide' encoded by the tmRNA and targeted for degradation. The ribosome is freed to recommence translation, which seems to be the essential function of trans-translation. The chain is SsrA-binding protein from Pseudomonas syringae pv. syringae (strain B728a).